We begin with the raw amino-acid sequence, 1942 residues long: Myosin-1 (1942 aa).

The Myosin N-terminal SH3-like domain maps to 33 to 82; sequence DAKSSVFVVDAKESFVKATVQSREGGKVTAKTEGGTTVTVKDDQVYPMNP. The residue at position 36 (Ser36) is a Phosphoserine. A phosphothreonine mark is found at Thr64 and Thr69. In terms of domain architecture, Myosin motor spans 86–785; sequence DKIEDMAMMT…LLGLLEEMRD (700 aa). An N6,N6,N6-trimethyllysine modification is found at Lys130. 179 to 186 is a binding site for ATP; it reads GESGAGKT. At Tyr389 the chain carries Phosphotyrosine. Thr419 carries the phosphothreonine modification. Tyr424 carries the post-translational modification Phosphotyrosine. Phosphoserine is present on Ser625. The interval 662 to 684 is actin-binding; that stretch reads LNKLMTNLRSTHPHFVRCIIPNE. His760 is modified (pros-methylhistidine). The interval 764-778 is actin-binding; it reads KFGHTKVFFKAGLLG. The IQ domain maps to 788–817; that stretch reads LAQLITRTQAMCRGYLARVEYQKMVERRES. Positions 846–1942 form a coiled coil; the sequence is LLKSAETEKE…EVHTKIISEE (1097 aa). A phosphoserine mark is found at Ser1095, Ser1099, Ser1165, Ser1240, and Ser1246. Residues 1156–1175 form a disordered region; sequence RLEEAGGATSAQIEMNKKRE. Thr1258 is subject to Phosphothreonine. The residue at position 1264 (Ser1264) is a Phosphoserine. Phosphothreonine is present on residues Thr1268 and Thr1289. A phosphoserine mark is found at Ser1291, Ser1295, Ser1306, and Ser1309. Phosphotyrosine is present on Tyr1467. Phosphothreonine is present on Thr1470. Ser1477 carries the phosphoserine modification. Phosphotyrosine is present on Tyr1495. Position 1498 is a phosphoserine (Ser1498). Thr1504 is subject to Phosphothreonine. Ser1517 is modified (phosphoserine). Thr1520 is subject to Phosphothreonine. 7 positions are modified to phosphoserine: Ser1545, Ser1557, Ser1577, Ser1603, Ser1606, Ser1717, and Ser1729. 2 positions are modified to phosphothreonine: Thr1733 and Thr1739. Position 1742 is a phosphoserine (Ser1742).

The protein belongs to the TRAFAC class myosin-kinesin ATPase superfamily. Myosin family. As to quaternary structure, muscle myosin is a hexameric protein that consists of 2 heavy chain subunits (MHC), 2 alkali light chain subunits (MLC) and 2 regulatory light chain subunits (MLC-2). Interacts with SLC26A5. As to expression, expressed in the cochlea (at protein level). Strongly expressed in spiral ganglion neurons with axonal sprouts and supporting cells around hair cells. In the organ of Corti, it is expressed in inner and outer hair cells, and in supporting cells.

The protein localises to the cytoplasm. It localises to the myofibril. Required for normal hearing. It plays a role in cochlear amplification of auditory stimuli, likely through the positive regulation of prestin (SLC26A5) activity and outer hair cell (OHC) electromotility. This is Myosin-1 from Mus musculus (Mouse).